We begin with the raw amino-acid sequence, 176 residues long: Envelope protein 167 (176 aa).

Met-1 is a topological domain (intravirion). Residues 2-22 (YLVLLIAIILFITIILVIFLI) form a helical membrane-spanning segment. The Virion surface segment spans residues 23 to 176 (SGLFYPEQNP…AVMAIPRKVL (154 aa)).

Belongs to the asfivirus envelope protein p22 family.

The protein localises to the virion membrane. It localises to the host cell membrane. This African swine fever virus (isolate Warthog/Namibia/Wart80/1980) (ASFV) protein is Envelope protein 167.